A 278-amino-acid chain; its full sequence is HTH-type transcriptional regulator TsaQ1/TsaQ2 (278 aa).

In terms of domain architecture, HTH iclR-type spans 19 to 80; that stretch reads VHSLAKGLEI…PRSRKLAMGA (62 aa). Positions 40–59 form a DNA-binding region, H-T-H motif; that stretch reads NQQLVELTGLPKATVSRLTS. One can recognise an IclR-ED domain in the interval 95-266; that stretch reads LQRIARPHME…VQDIQAEMRA (172 aa).

Its function is as follows. Both copies function as additional regulators for the tsa locus, specifically for tsaT. This chain is HTH-type transcriptional regulator TsaQ1/TsaQ2 (tsaQ1), found in Comamonas testosteroni (Pseudomonas testosteroni).